Here is a 691-residue protein sequence, read N- to C-terminus: Solute carrier family 28 member 3 (691 aa).

The disordered stretch occupies residues 1–78 (MELRSTAAPR…HMEDDDEEMQ (78 aa)). The Cytoplasmic segment spans residues 1 to 102 (MELRSTAAPR…FCRKHKTTLR (102 aa)). The segment covering 21 to 30 (NEENFLENEN) has biased composition (low complexity). Residues 31-42 (TSGNNSIRSRAV) show a composition bias toward polar residues. A compositionally biased stretch (basic and acidic residues) spans 43–54 (QSREHTNTKQDE). The helical transmembrane segment at 103–123 (HIIWGILLAGYLVMVISACVL) threads the bilayer. Over 124-128 (NFHRA) the chain is Extracellular. Residues 129–149 (LPLFVITVAAIFFVVWDHLMA) form a helical membrane-spanning segment. Over 150-173 (KYEHRIDEMLSPGRRLLNSHWFWL) the chain is Cytoplasmic. The helical transmembrane segment at 174–194 (KWVIWSSLVLAVIFWLAFDTA) threads the bilayer. Over 195-197 (KLG) the chain is Extracellular. A helical transmembrane segment spans residues 198 to 219 (QQQLVSFGGLIMYIVLLFLFSK). Topologically, residues 220–227 (YPTRVYWR) are cytoplasmic. A helical transmembrane segment spans residues 228-247 (PVLWGIGLQFLLGLLILRTD). At 248 to 284 (PGFIAFDWLGRQVQTFLEYTDAGASFVFGEKYKDHFF) the chain is on the extracellular side. A helical transmembrane segment spans residues 285-305 (AFKVLPIVVFFSTVMSMLYYL). Topologically, residues 306–329 (GLMQWIIRKVGWIMLVTTGSSPIE) are cytoplasmic. An intramembrane region (helical) is located at residues 330 to 348 (SVVASGNIFVGQTESPLLV). Residues 349–361 (RPYLPYITKSELH) are Cytoplasmic-facing. The helical transmembrane segment at 362–384 (AIMTAGFSTIAGSVLGAYISFGV) threads the bilayer. Residues 385-386 (PS) lie on the Extracellular side of the membrane. Residues 387-408 (SHLLTASVMSAPASLAAAKLFW) traverse the membrane as a helical segment. Residues 409 to 443 (PETEKPKITLKNAMKMESGDSGNLLEAATQGASSS) are Cytoplasmic-facing. The helical transmembrane segment at 444 to 469 (ISLVANIAVNLIAFLALLSFMNSALS) threads the bilayer. Residues 470 to 507 (WFGNMFDYPQLSFELICSYIFMPFSFMMGVEWQDSFMV) are Extracellular-facing. The helical intramembrane region spans 508 to 527 (ARLIGYKTFFNEFVAYEHLS). Residues 528-566 (KWIHLRKEGGPKFVNGVQQYISIRSEIIATYALCGFANI) lie on the Extracellular side of the membrane. A helical membrane pass occupies residues 567-577 (GSLGIVIGGLT). The Cytoplasmic segment spans residues 578 to 590 (SMAPSRKRDIASG). Residues 591 to 613 (AVRALIAGTVACFMTACIAGILS) form a helical membrane-spanning segment. Residues 614-691 (STPVDINCHH…FNCNGISNTF (78 aa)) lie on the Extracellular side of the membrane.

It belongs to the concentrative nucleoside transporter (CNT) (TC 2.A.41) family. As to quaternary structure, homotrimer. As to expression, expressed in pancreas, bone marrow, trachea, mammary gland, liver, prostate, and regions of intestine, brain, lung, placenta, testis, kidney, and heart.

The protein localises to the cell membrane. It is found in the endoplasmic reticulum membrane. It catalyses the reaction thymidine(out) + 2 Na(+)(out) = thymidine(in) + 2 Na(+)(in). The enzyme catalyses cytidine(out) + 2 Na(+)(out) = cytidine(in) + 2 Na(+)(in). It carries out the reaction uridine(out) + 2 Na(+)(out) = uridine(in) + 2 Na(+)(in). The catalysed reaction is adenosine(out) + 2 Na(+)(out) = adenosine(in) + 2 Na(+)(in). It catalyses the reaction guanosine(out) + 2 Na(+)(out) = guanosine(in) + 2 Na(+)(in). The enzyme catalyses inosine(out) + 2 Na(+)(out) = inosine(in) + 2 Na(+)(in). Sodium-dependent, pyrimidine- and purine-selective. Involved in the homeostasis of endogenous nucleosides. Exhibits the transport characteristics of the nucleoside transport system cib or N3 subtype (N3/cib) (with marked transport of both thymidine and inosine). Employs a 2:1 sodium/nucleoside ratio. Transports uridine. Also able to transport gemcitabine, 3'-azido-3'-deoxythymidine (AZT), ribavirin and 3-deazauridine. The polypeptide is Solute carrier family 28 member 3 (SLC28A3) (Homo sapiens (Human)).